A 470-amino-acid chain; its full sequence is 3-isopropylmalate dehydratase large subunit (470 aa).

C349, C410, and C413 together coordinate [4Fe-4S] cluster.

The protein belongs to the aconitase/IPM isomerase family. LeuC type 1 subfamily. In terms of assembly, heterodimer of LeuC and LeuD. The cofactor is [4Fe-4S] cluster.

The enzyme catalyses (2R,3S)-3-isopropylmalate = (2S)-2-isopropylmalate. It participates in amino-acid biosynthesis; L-leucine biosynthesis; L-leucine from 3-methyl-2-oxobutanoate: step 2/4. Functionally, catalyzes the isomerization between 2-isopropylmalate and 3-isopropylmalate, via the formation of 2-isopropylmaleate. This is 3-isopropylmalate dehydratase large subunit from Nitrosomonas europaea (strain ATCC 19718 / CIP 103999 / KCTC 2705 / NBRC 14298).